Here is a 670-residue protein sequence, read N- to C-terminus: DNA ligase (670 aa).

NAD(+)-binding positions include 34–38, 83–84, and glutamate 113; these read DFEFD and SL. Lysine 115 serves as the catalytic N6-AMP-lysine intermediate. The NAD(+) site is built by arginine 136, glutamate 173, lysine 288, and lysine 312. 4 residues coordinate Zn(2+): cysteine 406, cysteine 409, cysteine 424, and cysteine 430. Positions 591–670 constitute a BRCT domain; it reads PESDKFAGKS…EAEFISLLNS (80 aa).

This sequence belongs to the NAD-dependent DNA ligase family. LigA subfamily. Mg(2+) serves as cofactor. Requires Mn(2+) as cofactor.

The catalysed reaction is NAD(+) + (deoxyribonucleotide)n-3'-hydroxyl + 5'-phospho-(deoxyribonucleotide)m = (deoxyribonucleotide)n+m + AMP + beta-nicotinamide D-nucleotide.. Functionally, DNA ligase that catalyzes the formation of phosphodiester linkages between 5'-phosphoryl and 3'-hydroxyl groups in double-stranded DNA using NAD as a coenzyme and as the energy source for the reaction. It is essential for DNA replication and repair of damaged DNA. The polypeptide is DNA ligase (Cytophaga hutchinsonii (strain ATCC 33406 / DSM 1761 / CIP 103989 / NBRC 15051 / NCIMB 9469 / D465)).